The chain runs to 420 residues: MDVDNGEGQVQVHLKTKQEQYAVPDVPYAIDGTVTTVELNTFVNALLRQKDGSSDTDFDFLVFDEYLRGRLCDHLREKAISFEDAIEIEYVERFPAPEPQDCLLHDDWVSAVKARGKWILSGCYDNSLNLWTNKGKHILTISGHTAPIKAVDWISLDEETGRFVSTSQDQTAMLWKWNVGSNAVDCVSVCKGHERGVDSVSVSPDGLRFATGSWDTMLKVWSAELDDGVEGSSKRMKESGVRTPKITLQGHRESVSAVQWMDATTLLTGSWDYTLKVWDLSLEGIKTEISTNKSIFDASYSKLNRLILTASADKNLRLYDPRTNQGSVVRNTYLGHNAWVQTVMWSTTEEFLFVSGAYDNQNKLWDCRSPKAPLYDLLGHGDKVLDIDWSNPKYIVSGGVDNTVRVFKSRKALAEDTETK.

Positions 10-92 (VQVHLKTKQE…EDAIEIEYVE (83 aa)) are ubiquitin-like (UBL) domain. 7 WD repeats span residues 104–142 (LHDD…LTIS), 143–185 (GHTA…NAVD), 192–231 (GHER…GVEG), 250–288 (GHRE…IKTE), 290–329 (STNK…GSVV), 335–375 (GHNA…APLY), and 379–417 (GHGD…AEDT).

The protein belongs to the WD repeat WDR12/YTM1 family.

It localises to the nucleus. Its subcellular location is the nucleolus. The protein localises to the nucleoplasm. In terms of biological role, required for maturation of ribosomal RNAs and formation of the large ribosomal subunit. The chain is Ribosome biogenesis protein WDR12 homolog from Drosophila sechellia (Fruit fly).